The primary structure comprises 261 residues: V-type proton ATPase subunit D (261 aa).

The residue at position 241 (S241) is a Phosphoserine.

Belongs to the V-ATPase D subunit family. As to quaternary structure, V-ATPase is a heteromultimeric enzyme composed of a peripheral catalytic V1 complex (components A to H) attached to an integral membrane V0 proton pore complex (components: a, c, c'', d and e).

It localises to the vacuole membrane. Its function is as follows. Subunit of the peripheral V1 complex of vacuolar ATPase. V-ATPase is responsible for acidifying a variety of intracellular compartments in eukaryotic cells, thus providing most of the energy required for transport processes in the vacuolar system. This Arabidopsis thaliana (Mouse-ear cress) protein is V-type proton ATPase subunit D (VHA-D).